The following is a 197-amino-acid chain: dITP/XTP pyrophosphatase (197 aa).

Residue 8 to 13 coordinates substrate; it reads TGNAGK. Positions 40 and 69 each coordinate Mg(2+). The Proton acceptor role is filled by Asp69. Residues Ser70, 154–157, Lys177, and 182–183 contribute to the substrate site; these read FGYD and HR.

Belongs to the HAM1 NTPase family. Homodimer. The cofactor is Mg(2+).

The enzyme catalyses XTP + H2O = XMP + diphosphate + H(+). It carries out the reaction dITP + H2O = dIMP + diphosphate + H(+). The catalysed reaction is ITP + H2O = IMP + diphosphate + H(+). Functionally, pyrophosphatase that catalyzes the hydrolysis of nucleoside triphosphates to their monophosphate derivatives, with a high preference for the non-canonical purine nucleotides XTP (xanthosine triphosphate), dITP (deoxyinosine triphosphate) and ITP. Seems to function as a house-cleaning enzyme that removes non-canonical purine nucleotides from the nucleotide pool, thus preventing their incorporation into DNA/RNA and avoiding chromosomal lesions. The polypeptide is dITP/XTP pyrophosphatase (rdgB) (Salmonella typhi).